Reading from the N-terminus, the 559-residue chain is Tectonic-like complex member MKS1 (559 aa).

A C2 B9-type domain is found at 311–439 (LRLFVNGEVV…TVSTWRPVEL (129 aa)).

As to quaternary structure, part of the tectonic-like complex (also named B9 complex). Interacts with TMEM107. Interacts with TCTN3, AHI1, TCTN1, TCTN2, CC2D2A. Interacts with FLNA. Interacts with TMEM67. Interacts with B9D1 and B9D2.

The protein resides in the cytoplasm. Its subcellular location is the cytoskeleton. The protein localises to the cilium basal body. It localises to the microtubule organizing center. It is found in the centrosome. Component of the tectonic-like complex, a complex localized at the transition zone of primary cilia and acting as a barrier that prevents diffusion of transmembrane proteins between the cilia and plasma membranes. Involved in centrosome migration to the apical cell surface during early ciliogenesis. Required for ciliary structure and function, including a role in regulating length and appropriate number through modulating centrosome duplication. Required for cell branching morphology. In Homo sapiens (Human), this protein is Tectonic-like complex member MKS1 (MKS1).